The following is an 877-amino-acid chain: DNA polymerase I (877 aa).

Residues 180-270 (TPAQFIDLKA…EIGLDDTLLK (91 aa)) enclose the 5'-3' exonuclease domain. Positions 308–468 (DEIDFEIVTD…AKEKMMAELL (161 aa)) constitute a 3'-5' exonuclease domain.

Belongs to the DNA polymerase type-A family. Single-chain monomer with multiple functions.

The enzyme catalyses DNA(n) + a 2'-deoxyribonucleoside 5'-triphosphate = DNA(n+1) + diphosphate. In terms of biological role, in addition to polymerase activity, this DNA polymerase exhibits 3'-5' and 5'-3' exonuclease activity. The chain is DNA polymerase I (polA) from Lactococcus lactis subsp. lactis (strain IL1403) (Streptococcus lactis).